We begin with the raw amino-acid sequence, 205 residues long: Probable thymidylate kinase (205 aa).

An ATP-binding site is contributed by 10 to 17 (GIDGSGKT).

This sequence belongs to the thymidylate kinase family.

The catalysed reaction is dTMP + ATP = dTDP + ADP. The sequence is that of Probable thymidylate kinase (tmk) from Pyrococcus abyssi (strain GE5 / Orsay).